Here is a 465-residue protein sequence, read N- to C-terminus: ATP synthase subunit beta (465 aa).

155 to 162 (GGAGVGKT) lines the ATP pocket.

The protein belongs to the ATPase alpha/beta chains family. As to quaternary structure, F-type ATPases have 2 components, CF(1) - the catalytic core - and CF(0) - the membrane proton channel. CF(1) has five subunits: alpha(3), beta(3), gamma(1), delta(1), epsilon(1). CF(0) has three main subunits: a(1), b(2) and c(9-12). The alpha and beta chains form an alternating ring which encloses part of the gamma chain. CF(1) is attached to CF(0) by a central stalk formed by the gamma and epsilon chains, while a peripheral stalk is formed by the delta and b chains.

Its subcellular location is the cell membrane. It carries out the reaction ATP + H2O + 4 H(+)(in) = ADP + phosphate + 5 H(+)(out). Its function is as follows. Produces ATP from ADP in the presence of a proton gradient across the membrane. The catalytic sites are hosted primarily by the beta subunits. The protein is ATP synthase subunit beta of Buchnera aphidicola subsp. Baizongia pistaciae (strain Bp).